The following is a 299-amino-acid chain: Probable alpha-L-glutamate ligase (299 aa).

The 183-residue stretch at 111 to 293 (LQALAAANIA…VATQMIAYLE (183 aa)) folds into the ATP-grasp domain. Residues lysine 147, 184–185 (DF), aspartate 193, and 217–219 (RAN) contribute to the ATP site. Aspartate 254, glutamate 266, and asparagine 268 together coordinate Mg(2+). 3 residues coordinate Mn(2+): aspartate 254, glutamate 266, and asparagine 268.

The protein belongs to the RimK family. The cofactor is Mg(2+). Mn(2+) is required as a cofactor.

This chain is Probable alpha-L-glutamate ligase, found in Mannheimia succiniciproducens (strain KCTC 0769BP / MBEL55E).